Here is a 175-residue protein sequence, read N- to C-terminus: Nucleoside diphosphate kinase 6 (175 aa).

ATP-binding residues include K8, F57, R85, T91, R105, and N115. H118 serves as the catalytic Pros-phosphohistidine intermediate.

Belongs to the NDK family. Mg(2+) serves as cofactor.

It catalyses the reaction a 2'-deoxyribonucleoside 5'-diphosphate + ATP = a 2'-deoxyribonucleoside 5'-triphosphate + ADP. The enzyme catalyses a ribonucleoside 5'-diphosphate + ATP = a ribonucleoside 5'-triphosphate + ADP. In terms of biological role, major role in the synthesis of nucleoside triphosphates other than ATP. The ATP gamma phosphate is transferred to the NDP beta phosphate via a ping-pong mechanism, using a phosphorylated active-site intermediate. This is Nucleoside diphosphate kinase 6 (Nme6) from Rattus norvegicus (Rat).